A 321-amino-acid polypeptide reads, in one-letter code: Putative pyridoxal kinase (321 aa).

Ser-23 and Tyr-144 together coordinate substrate. Residues 203-204 (TS) and 230-242 (TFPR…VGTG) contribute to the ATP site. Residue Asp-243 participates in substrate binding.

The protein belongs to the pyridoxine kinase family. Zn(2+) is required as a cofactor. It depends on Mg(2+) as a cofactor.

It carries out the reaction pyridoxal + ATP = pyridoxal 5'-phosphate + ADP + H(+). In terms of biological role, required for synthesis of pyridoxal-5-phosphate from vitamin B6. This is Putative pyridoxal kinase from Caenorhabditis elegans.